We begin with the raw amino-acid sequence, 454 residues long: MRTTGFSGLLSATVVGVYVLVVVGATAALADAAAACQGWPLCGGDLSDPSVPVAVLHRGVAAVVGLLVIATAVVGWSETTARVKTTLALALALYPAQVVLGALVATGSALANLHLFVAMAIFAVLVVGLAWHLEAETGSDDAPESPPELAPPVDEEPAATEQPALSGLARAKATARAYFELTKPRLMWLLCLVAGAGMVIAGTPTVRTVVFTLGGGVLAIGASGTFNHVLERDIDRRMERTSDRPIATHEVPVANALAFGGLLAVASLWAFLSVNLLAAALGLAAIAFYSVVYTLILKPNTVQNTVIGGAAGALPALIGYAAVTGTIGIGGLVLAAVIFLWTPAHFYNLALAYKDDYERGGFPMMPVVRGETETRKHIVFYLGATLLGAGALAAVTDLGWLYAATAVLAAGVFLWAVVELHYEQTDRAAFRSFHASNAYLGLVLVAILIDSLAV.

Residues 1–186 (MRTTGFSGLL…AYFELTKPRL (186 aa)) form a unknown region. Helical transmembrane passes span 9–29 (LLSATVVGVYVLVVVGATAAL), 59–79 (GVAAVVGLLVIATAVVGWSET), 87–107 (LALALALYPAQVVLGALVATG), and 113–133 (LHLFVAMAIFAVLVVGLAWHL). The segment at 137-164 (TGSDDAPESPPELAPPVDEEPAATEQPA) is disordered. The next 9 membrane-spanning stretches (helical) occupy residues 186-206 (LMWLLCLVAGAGMVIAGTPTV), 209-229 (VVFTLGGGVLAIGASGTFNHV), 251-271 (VPVANALAFGGLLAVASLWAF), 276-296 (LLAAALGLAAIAFYSVVYTLI), 300-320 (NTVQNTVIGGAAGALPALIGY), 321-341 (AAVTGTIGIGGLVLAAVIFLW), 377-397 (HIVFYLGATLLGAGALAAVTD), 398-418 (LGWLYAATAVLAAGVFLWAVV), and 433-453 (FHASNAYLGLVLVAILIDSLA). Positions 187-451 (MWLLCLVAGA…LVLVAILIDS (265 aa)) are protoheme IX prenyltransferase.

It in the C-terminal section; belongs to the UbiA prenyltransferase family. Protoheme IX farnesyltransferase subfamily.

It localises to the cell membrane. It carries out the reaction heme b + (2E,6E)-farnesyl diphosphate + H2O = Fe(II)-heme o + diphosphate. The protein operates within porphyrin-containing compound metabolism; heme O biosynthesis; heme O from protoheme: step 1/1. Converts heme B (protoheme IX) to heme O by substitution of the vinyl group on carbon 2 of heme B porphyrin ring with a hydroxyethyl farnesyl side group. The polypeptide is Protoheme IX farnesyltransferase 1 (ctaB1) (Natronomonas pharaonis (strain ATCC 35678 / DSM 2160 / CIP 103997 / JCM 8858 / NBRC 14720 / NCIMB 2260 / Gabara) (Halobacterium pharaonis)).